A 158-amino-acid polypeptide reads, in one-letter code: Ribonuclease H (158 aa).

The 142-residue stretch at 2-143 (PEKIIELFTD…VDALLNRVMD (142 aa)) folds into the RNase H type-1 domain. Residues Asp11, Glu49, Asp71, and Asp135 each contribute to the Mg(2+) site.

It belongs to the RNase H family. Monomer. Requires Mg(2+) as cofactor.

The protein localises to the cytoplasm. The catalysed reaction is Endonucleolytic cleavage to 5'-phosphomonoester.. Functionally, endonuclease that specifically degrades the RNA of RNA-DNA hybrids. The chain is Ribonuclease H from Acidithiobacillus ferrooxidans (strain ATCC 23270 / DSM 14882 / CIP 104768 / NCIMB 8455) (Ferrobacillus ferrooxidans (strain ATCC 23270)).